Here is a 286-residue protein sequence, read N- to C-terminus: ATP synthase gamma chain (286 aa).

The protein belongs to the ATPase gamma chain family. As to quaternary structure, F-type ATPases have 2 components, CF(1) - the catalytic core - and CF(0) - the membrane proton channel. CF(1) has five subunits: alpha(3), beta(3), gamma(1), delta(1), epsilon(1). CF(0) has three main subunits: a, b and c.

Its subcellular location is the cell inner membrane. In terms of biological role, produces ATP from ADP in the presence of a proton gradient across the membrane. The gamma chain is believed to be important in regulating ATPase activity and the flow of protons through the CF(0) complex. In Shewanella baltica (strain OS223), this protein is ATP synthase gamma chain.